The following is a 566-amino-acid chain: KsdD-like steroid dehydrogenase MT0809 (566 aa).

Residue 23 to 54 (DAIVVGAGLAGLVAACELADRGLRVLILDQEN) participates in FAD binding.

Belongs to the FAD-dependent oxidoreductase 2 family. The cofactor is FAD.

It participates in lipid metabolism; steroid biosynthesis. Its function is as follows. Able to catalyze the elimination of the C-1 and C-2 hydrogen atoms of the A-ring from the polycyclic ring structure of 3-ketosteroids. This Mycobacterium tuberculosis (strain CDC 1551 / Oshkosh) protein is KsdD-like steroid dehydrogenase MT0809.